The primary structure comprises 300 residues: Protoheme IX farnesyltransferase (300 aa).

9 helical membrane-spanning segments follow: residues 24–44, 46–66, 94–114, 118–138, 146–166, 172–192, 217–237, 239–259, and 278–298; these read VTQL…PGMV, WHVL…AFAI, PQIL…LYTF, LTMW…TLLL, IVIG…AVTG, AWIL…VLAL, LHIL…FISG, SGAV…AYAW, and IVYL…RPLL.

Belongs to the UbiA prenyltransferase family. Protoheme IX farnesyltransferase subfamily.

It is found in the cell inner membrane. The enzyme catalyses heme b + (2E,6E)-farnesyl diphosphate + H2O = Fe(II)-heme o + diphosphate. Its pathway is porphyrin-containing compound metabolism; heme O biosynthesis; heme O from protoheme: step 1/1. In terms of biological role, converts heme B (protoheme IX) to heme O by substitution of the vinyl group on carbon 2 of heme B porphyrin ring with a hydroxyethyl farnesyl side group. This Burkholderia lata (strain ATCC 17760 / DSM 23089 / LMG 22485 / NCIMB 9086 / R18194 / 383) protein is Protoheme IX farnesyltransferase.